A 1493-amino-acid chain; its full sequence is Mitogen-activated protein kinase kinase kinase 1 (1493 aa).

Low complexity-rich tracts occupy residues 1 to 23 and 33 to 42; these read MAAAAGDRASSSGFPGAAAASPE and GSGAPAAGAG. 2 disordered regions span residues 1–171 and 222–295; these read MAAA…DRPE and LQGE…EETS. At Ala-2 the chain carries N-acetylalanine. Ser-21 is modified (phosphoserine). Pro residues predominate over residues 84–94; that stretch reads PPCPSTSPSPE. 2 stretches are compositionally biased toward low complexity: residues 95 to 108 and 135 to 151; these read PADAAAGASGFQPA and ARSPAGAEPPSAAAPSG. Ser-137 bears the Phosphoserine mark. Positions 152–171 are enriched in basic and acidic residues; the sequence is REMENKETLKGLHKMDDRPE. The span at 230–257 shows a compositional bias: low complexity; it reads SAAPAPKGRRSPSPGSSPSGRSGKPESP. Ser-265 carries the phosphoserine modification. Residue Thr-275 is modified to Phosphothreonine. Phosphoserine occurs at positions 282, 287, and 290. The SWIM-type zinc finger occupies 328 to 356; the sequence is YRVFIGPQNCSCGRGTFCIHLLFVMLRVF. The RING-type zinc finger occupies 433–482; the sequence is CPICLLGMLDEESLTVCEDGCRNKLHHHCMSIWAEECRRNREPLICPLCR. The span at 496-506 shows a compositional bias: polar residues; sequence SSPVDSPTSLR. Disordered stretches follow at residues 496–524, 866–910, 923–955, and 992–1060; these read SSPVDSPTSLRGVQQPSSPQQPVAGSQRR, DTLD…LSAS, VGLPSSATTEQPKPTVQTKGRPHSQCLNSSPLS, and PCKI…ASKN. Residues Ser-497, Ser-521, and Ser-910 each carry the phosphoserine modification. The segment covering 507-522 has biased composition (low complexity); it reads GVQQPSSPQQPVAGSQ. 2 stretches are compositionally biased toward polar residues: residues 925 to 940 and 998 to 1014; these read LPSSATTEQPKPTVQT and ASPQTQRKFSLQFQRTC. Phosphoserine occurs at positions 999 and 1024. Positions 1049–1060 are enriched in polar residues; that stretch reads GSTSKLGDASKN. Positions 1224–1489 constitute a Protein kinase domain; sequence WLKGQQIGLG…SRELLKHPVF (266 aa). ATP contacts are provided by residues 1230 to 1238 and Lys-1253; that span reads IGLGAFSSC. The Proton acceptor role is filled by Asp-1350. A phosphothreonine; by autocatalysis mark is found at Thr-1381 and Thr-1393.

The protein belongs to the protein kinase superfamily. STE Ser/Thr protein kinase family. MAP kinase kinase kinase subfamily. As to quaternary structure, binds both upstream activators and downstream substrates in multimolecular complexes through its N-terminus. Oligomerizes after binding MAP4K2 or TRAF2. Interacts (via the kinase catalytic domain) with STK38. Interacts with GRIPAP1. Requires Mg(2+) as cofactor. Autophosphorylated. In terms of tissue distribution, most highly expressed in spleen, kidney and lung.

It localises to the membrane. It catalyses the reaction L-seryl-[protein] + ATP = O-phospho-L-seryl-[protein] + ADP + H(+). The catalysed reaction is L-threonyl-[protein] + ATP = O-phospho-L-threonyl-[protein] + ADP + H(+). Its activity is regulated as follows. Activated by autophosphorylation on Thr-1381 and Thr-1393 following oligomerization. In terms of biological role, component of a protein kinase signal transduction cascade. Activates the ERK and JNK kinase pathways by phosphorylation of MAP2K1 and MAP2K4. May phosphorylate the MAPK8/JNK1 kinase. Activates CHUK and IKBKB, the central protein kinases of the NF-kappa-B pathway. This Rattus norvegicus (Rat) protein is Mitogen-activated protein kinase kinase kinase 1 (Map3k1).